The following is a 730-amino-acid chain: Catalase-peroxidase (730 aa).

A disordered region spans residues 1–21 (MTENKCPVTGKMSKATAGSGT). The tryptophyl-tyrosyl-methioninium (Trp-Tyr) (with M-244) cross-link spans 95-218 (WHSAGTYRVG…LAAVQMGLIY (124 aa)). Histidine 96 acts as the Proton acceptor in catalysis. A cross-link (tryptophyl-tyrosyl-methioninium (Tyr-Met) (with W-95)) is located at residues 218–244 (YVNPEGPNGNPDPLGSAHDVRETFARM). Histidine 259 provides a ligand contact to heme b.

The protein belongs to the peroxidase family. Peroxidase/catalase subfamily. Homodimer or homotetramer. Requires heme b as cofactor. Formation of the three residue Trp-Tyr-Met cross-link is important for the catalase, but not the peroxidase activity of the enzyme.

It catalyses the reaction H2O2 + AH2 = A + 2 H2O. It carries out the reaction 2 H2O2 = O2 + 2 H2O. Its function is as follows. Bifunctional enzyme with both catalase and broad-spectrum peroxidase activity. This Clostridium botulinum (strain Alaska E43 / Type E3) protein is Catalase-peroxidase.